The chain runs to 133 residues: UPF0768 protein C977.18 (133 aa).

This sequence belongs to the UPF0768 family.

The sequence is that of UPF0768 protein C977.18 from Schizosaccharomyces pombe (strain 972 / ATCC 24843) (Fission yeast).